The sequence spans 455 residues: Ribulose bisphosphate carboxylase large chain (455 aa).

Lys-5 is subject to N6,N6,N6-trimethyllysine. Asn-114 and Thr-164 together coordinate substrate. Lys-166 (proton acceptor) is an active-site residue. Lys-168 provides a ligand contact to substrate. The Mg(2+) site is built by Lys-192, Asp-194, and Glu-195. Residue Lys-192 is modified to N6-carboxylysine. The Proton acceptor role is filled by His-285. Residues Arg-286, His-318, and Ser-370 each coordinate substrate.

This sequence belongs to the RuBisCO large chain family. Type I subfamily. In terms of assembly, heterohexadecamer of 8 large chains and 8 small chains; disulfide-linked. The disulfide link is formed within the large subunit homodimers. Requires Mg(2+) as cofactor. The disulfide bond which can form in the large chain dimeric partners within the hexadecamer appears to be associated with oxidative stress and protein turnover.

The protein resides in the plastid. Its subcellular location is the chloroplast. It catalyses the reaction 2 (2R)-3-phosphoglycerate + 2 H(+) = D-ribulose 1,5-bisphosphate + CO2 + H2O. The enzyme catalyses D-ribulose 1,5-bisphosphate + O2 = 2-phosphoglycolate + (2R)-3-phosphoglycerate + 2 H(+). Functionally, ruBisCO catalyzes two reactions: the carboxylation of D-ribulose 1,5-bisphosphate, the primary event in carbon dioxide fixation, as well as the oxidative fragmentation of the pentose substrate in the photorespiration process. Both reactions occur simultaneously and in competition at the same active site. In Brownea coccinea (Rose of Venezuela), this protein is Ribulose bisphosphate carboxylase large chain.